Consider the following 336-residue polypeptide: Atypical chemokine receptor 1 (336 aa).

Over 1-63 (MGNCLHTAEL…CNLLDDSALP (63 aa)) the chain is Extracellular. 3 N-linked (GlcNAc...) asparagine glycosylation sites follow: asparagine 16, asparagine 27, and asparagine 33. Cystine bridges form between cysteine 51–cysteine 276 and cysteine 129–cysteine 195. Residues 64-84 (FFILTSVLGILASSTVLFILF) form a helical membrane-spanning segment. Residues 85-95 (RPLFRWQLCPG) are Cytoplasmic-facing. The helical transmembrane segment at 96-116 (WPVLAQLAVGSALFSIVVPIL) threads the bilayer. Residues 117-129 (APGLGSTHSSALC) are Extracellular-facing. Residues 130–153 (SLGYCVWYGSAFAQALLLGCHASL) form a helical membrane-spanning segment. Over 154–166 (GHRLGAGQVPGLT) the chain is Cytoplasmic. A helical membrane pass occupies residues 167 to 187 (LGLTVGIWGVAALLTLPVTLA). Topologically, residues 188–207 (SGASGGLCTPIHSTELKALQ) are extracellular. Residues 208–228 (ATHTVACLAIFVLLPLGLFGA) traverse the membrane as a helical segment. Over 229 to 244 (KGLKKALGMGPGPWMN) the chain is Cytoplasmic. The chain crosses the membrane as a helical span at residues 245 to 265 (ILWAWFIFWWPHGVVLGLDFL). The Extracellular portion of the chain corresponds to 266–287 (VRSKLLLLSTCLAQQALDLLLN). Residues 288–308 (LAEALAILHCVATPLILALFY) traverse the membrane as a helical segment. Topologically, residues 309-336 (HQATRTLLPSLPLPEGWSSHLDTLGSKS) are cytoplasmic.

Belongs to the G-protein coupled receptor 1 family. Atypical chemokine receptor subfamily.

The protein localises to the early endosome. It is found in the recycling endosome. It localises to the membrane. Functionally, atypical chemokine receptor that controls chemokine levels and localization via high-affinity chemokine binding that is uncoupled from classic ligand-driven signal transduction cascades, resulting instead in chemokine sequestration, degradation, or transcytosis. Also known as interceptor (internalizing receptor) or chemokine-scavenging receptor or chemokine decoy receptor. Has a promiscuous chemokine-binding profile, interacting with inflammatory chemokines of both the CXC and the CC subfamilies but not with homeostatic chemokines. Acts as a receptor for chemokines including CCL2, CCL5, CCL7, CCL11, CCL13, CCL14, CCL17, CXCL5, CXCL6, IL8/CXCL8, CXCL11, GRO, RANTES, MCP-1 and TARC. May regulate chemokine bioavailability and, consequently, leukocyte recruitment through two distinct mechanisms: when expressed in endothelial cells, it sustains the abluminal to luminal transcytosis of tissue-derived chemokines and their subsequent presentation to circulating leukocytes; when expressed in erythrocytes, serves as blood reservoir of cognate chemokines but also as a chemokine sink, buffering potential surges in plasma chemokine levels. This Gorilla gorilla gorilla (Western lowland gorilla) protein is Atypical chemokine receptor 1 (ACKR1).